A 140-amino-acid polypeptide reads, in one-letter code: MALVARRAAVPSARSSARPAFARAAPRRSVVVRAEAGAVNDDTFKNVVLESSVPVLVDFWAPWCGPCRIIAPVVDEIAGEYKDKLKCVKLNTDESPNVASEYGIRSIPTIMVFKGGKKCETIIGAVPKATIVQTVEKYLN.

Residues 1–34 (MALVARRAAVPSARSSARPAFARAAPRRSVVVRA) constitute a chloroplast transit peptide. Residues 35–140 (EAGAVNDDTF…IVQTVEKYLN (106 aa)) enclose the Thioredoxin domain. Residues cysteine 64 and cysteine 67 each act as nucleophile in the active site. A disulfide bond links cysteine 64 and cysteine 67.

The protein belongs to the thioredoxin family. Plant M-type subfamily. As to quaternary structure, forms a complex with heterodimeric ferredoxin-thioredoxin reductase (FTR) and ferredoxin.

Its subcellular location is the plastid. The protein resides in the chloroplast. Its function is as follows. Participates in various redox reactions through the reversible oxidation of the active center dithiol to a disulfide. The M form is known to activate NADP-malate dehydrogenase. This is Thioredoxin M-type, chloroplastic (TRXM) from Chlamydomonas reinhardtii (Chlamydomonas smithii).